Here is a 79-residue protein sequence, read N- to C-terminus: uncharacterized protein (79 aa).

The protein localises to the mitochondrion. This is an uncharacterized protein from Oenothera berteroana (Bertero's evening primrose).